The chain runs to 822 residues: A disintegrin and metallopeptidase domain 3 (822 aa).

Positions 1-16 (MLPLFLVLSYLGQVIA) are cleaved as a signal peptide. Residues 187–384 (RILRIKIIMD…PELDCLRNTS (198 aa)) form the Peptidase M12B domain. Disulfide bonds link Cys296/Cys379, Cys338/Cys363, Cys340/Cys345, Cys456/Cys476, Cys623/Cys635, Cys629/Cys641, and Cys643/Cys652. One can recognise a Disintegrin domain in the interval 395 to 484 (GSYCGNHLLE…GCAPDTKAAD (90 aa)). The EGF-like domain maps to 619 to 653 (GTRECEADDKCQGHGICNNLNNCQCESGFAPPECD). The helical transmembrane segment at 689 to 709 (VLLISFYILLPFLVVLAFMAV) threads the bilayer.

In terms of assembly, interacts with LY6K. Interacts with TEX101. Post-translationally, initially synthesized as a 110-kDa precursor in round spermatids, and the precursor is then processed into a 42-kDa mature protein during the sperm transport into and/or once in the epididymis. In terms of tissue distribution, expressed in sperm (at protein level).

Its subcellular location is the cell membrane. Functionally, involved in fertilization by controlling sperm migration into the oviduct. Promotes the binding of sperm to the oocyte zona pellucida. The sequence is that of A disintegrin and metallopeptidase domain 3 from Mus musculus (Mouse).